The sequence spans 248 residues: 4-hydroxy-tetrahydrodipicolinate reductase (248 aa).

NAD(+) contacts are provided by residues 9 to 14 (GAQGRV), 77 to 79 (GTT), and 104 to 107 (APNF). The Proton donor/acceptor role is filled by histidine 134. (S)-2,3,4,5-tetrahydrodipicolinate is bound at residue histidine 135. Lysine 138 functions as the Proton donor in the catalytic mechanism. 144 to 145 (GT) is a (S)-2,3,4,5-tetrahydrodipicolinate binding site. The segment at 157 to 176 (RREAGMPTQPDATEQSLDGA) is disordered.

This sequence belongs to the DapB family.

Its subcellular location is the cytoplasm. The enzyme catalyses (S)-2,3,4,5-tetrahydrodipicolinate + NAD(+) + H2O = (2S,4S)-4-hydroxy-2,3,4,5-tetrahydrodipicolinate + NADH + H(+). The catalysed reaction is (S)-2,3,4,5-tetrahydrodipicolinate + NADP(+) + H2O = (2S,4S)-4-hydroxy-2,3,4,5-tetrahydrodipicolinate + NADPH + H(+). It participates in amino-acid biosynthesis; L-lysine biosynthesis via DAP pathway; (S)-tetrahydrodipicolinate from L-aspartate: step 4/4. Its function is as follows. Catalyzes the conversion of 4-hydroxy-tetrahydrodipicolinate (HTPA) to tetrahydrodipicolinate. The sequence is that of 4-hydroxy-tetrahydrodipicolinate reductase from Corynebacterium diphtheriae (strain ATCC 700971 / NCTC 13129 / Biotype gravis).